A 308-amino-acid chain; its full sequence is ADP-L-glycero-D-manno-heptose-6-epimerase (308 aa).

NADP(+)-binding positions include 10-11 (FI), 31-32 (DN), Lys-38, Lys-53, 75-79 (EGACS), and Asn-92. The active-site Proton acceptor is the Tyr-139. Residue Lys-143 participates in NADP(+) binding. Asn-168 serves as a coordination point for substrate. NADP(+) contacts are provided by Val-169 and Lys-177. Lys-177 (proton acceptor) is an active-site residue. Substrate-binding positions include Ser-179, His-186, 200–203 (FAGS), Arg-208, and Tyr-271.

Belongs to the NAD(P)-dependent epimerase/dehydratase family. HldD subfamily. As to quaternary structure, homopentamer. NADP(+) is required as a cofactor.

It carries out the reaction ADP-D-glycero-beta-D-manno-heptose = ADP-L-glycero-beta-D-manno-heptose. It functions in the pathway nucleotide-sugar biosynthesis; ADP-L-glycero-beta-D-manno-heptose biosynthesis; ADP-L-glycero-beta-D-manno-heptose from D-glycero-beta-D-manno-heptose 7-phosphate: step 4/4. Catalyzes the interconversion between ADP-D-glycero-beta-D-manno-heptose and ADP-L-glycero-beta-D-manno-heptose via an epimerization at carbon 6 of the heptose. This Actinobacillus succinogenes (strain ATCC 55618 / DSM 22257 / CCUG 43843 / 130Z) protein is ADP-L-glycero-D-manno-heptose-6-epimerase.